The chain runs to 111 residues: uncharacterized protein (111 aa).

The protein belongs to the UPF0440 family.

This is an uncharacterized protein from Pyrococcus furiosus (strain ATCC 43587 / DSM 3638 / JCM 8422 / Vc1).